Consider the following 814-residue polypeptide: Syn-copalyl diphosphate synthase TPS3, chloroplastic (814 aa).

Residues 1–52 (MCSLSTLSPNFSNAYGSKSVSSTASRFPCWQRSNETWKTQSREVIHWTYVVR) constitute a chloroplast transit peptide. Residue K248 coordinates substrate. The Mg(2+) site is built by D386 and D388. Residues 386-389 (DIDD) carry the DXDD motif motif. Residue K472 participates in substrate binding.

Belongs to the terpene synthase family. It depends on Mg(2+) as a cofactor. In terms of tissue distribution, mostly expressed in trichomes of leaves and fruits.

The protein localises to the plastid. It is found in the chloroplast. The enzyme catalyses (2E,6E,10E)-geranylgeranyl diphosphate = 9alpha-copalyl diphosphate. The protein operates within secondary metabolite biosynthesis; terpenoid biosynthesis. Its function is as follows. Involved in the biosynthesis of labdane-type diterpenoid including cleroda-dienols, and peregrinol lactones and furan derivatives, dopaminergic diterpenoids that can bind to dopamine receptors in the human pituitary gland, have probably ability to lower prolactin levels, and are used to treat menstrual cycle disorders (e.g. premenstrual syndrome and mastodynia). Terpene synthase that produces syn-copalyl diphosophate from geranylgeranyl diphosphate (GGPP). The protein is Syn-copalyl diphosphate synthase TPS3, chloroplastic of Vitex agnus-castus (Chaste tree).